The chain runs to 77 residues: Cell division topological specificity factor (77 aa).

The protein belongs to the MinE family.

Prevents the cell division inhibition by proteins MinC and MinD at internal division sites while permitting inhibition at polar sites. This ensures cell division at the proper site by restricting the formation of a division septum at the midpoint of the long axis of the cell. In Helicobacter acinonychis (strain Sheeba), this protein is Cell division topological specificity factor.